Reading from the N-terminus, the 391-residue chain is Tryptophan synthase beta chain (391 aa).

Lys84 carries the N6-(pyridoxal phosphate)lysine modification.

The protein belongs to the TrpB family. Tetramer of two alpha and two beta chains. Requires pyridoxal 5'-phosphate as cofactor.

It carries out the reaction (1S,2R)-1-C-(indol-3-yl)glycerol 3-phosphate + L-serine = D-glyceraldehyde 3-phosphate + L-tryptophan + H2O. Its pathway is amino-acid biosynthesis; L-tryptophan biosynthesis; L-tryptophan from chorismate: step 5/5. The beta subunit is responsible for the synthesis of L-tryptophan from indole and L-serine. This Caldanaerobacter subterraneus subsp. tengcongensis (strain DSM 15242 / JCM 11007 / NBRC 100824 / MB4) (Thermoanaerobacter tengcongensis) protein is Tryptophan synthase beta chain.